We begin with the raw amino-acid sequence, 458 residues long: ATP synthase subunit beta (458 aa).

An ATP-binding site is contributed by 148 to 155 (GGAGVGKT).

It belongs to the ATPase alpha/beta chains family. As to quaternary structure, F-type ATPases have 2 components, CF(1) - the catalytic core - and CF(0) - the membrane proton channel. CF(1) has five subunits: alpha(3), beta(3), gamma(1), delta(1), epsilon(1). CF(0) has three main subunits: a(1), b(2) and c(9-12). The alpha and beta chains form an alternating ring which encloses part of the gamma chain. CF(1) is attached to CF(0) by a central stalk formed by the gamma and epsilon chains, while a peripheral stalk is formed by the delta and b chains.

Its subcellular location is the cell inner membrane. It catalyses the reaction ATP + H2O + 4 H(+)(in) = ADP + phosphate + 5 H(+)(out). Its function is as follows. Produces ATP from ADP in the presence of a proton gradient across the membrane. The catalytic sites are hosted primarily by the beta subunits. This is ATP synthase subunit beta from Mannheimia succiniciproducens (strain KCTC 0769BP / MBEL55E).